The following is a 429-amino-acid chain: ETS domain-containing protein Elk-1 (429 aa).

Residues 5–86 (VTLWQFLLQL…SGQKFVYKFV (82 aa)) constitute a DNA-binding region (ETS). Disordered stretches follow at residues 119-146 (HAGP…GLAR), 165-204 (SLQP…SPNP), and 227-253 (APNQ…KVEG). Residues 169–178 (QPQPPIPPRP) show a composition bias toward pro residues. Residues K231, K250, and K255 each participate in a glycyl lysine isopeptide (Lys-Gly) (interchain with G-Cter in SUMO) cross-link. A compositionally biased stretch (polar residues) spans 302–312 (STSTTEITQPQ). Positions 302 to 354 (STSTTEITQPQKGRKPRDLELPLSPSLLGGQGPERTPGSGTSSGLQAPGPALT) are disordered. A Phosphoserine; by MAPK1 modification is found at S325. A phosphothreonine; by MAPK1 mark is found at T337, T354, T364, and T369. Positions 350–400 (GPALTPSLLPTHTLTPVLLTPSSLPPSIHFWSTLSPIAPRSPAKLSFQFPS) are sufficient for interaction with MAD2L2. Residue T382 is glycosylated (O-linked (GlcNAc) threonine). At S384 the chain carries Phosphoserine; by MAPK1 and MAPK8. Phosphoserine; by MAPK1 is present on S390. At T418 the chain carries Phosphothreonine; by MAPK1. Position 423 is a phosphoserine; by MAPK1 (S423).

This sequence belongs to the ETS family. Interacts in its sumoylated form with PIAS2/PIASX which enhances its transcriptional activator activity. Interacts with MAD2L2; the interaction is direct and promotes phosphorylation by the kinases MAPK8 and/or MAPK9. Interacts with POU1F1. Post-translationally, sumoylation represses transcriptional activator activity as it results in recruitment of HDAC2 to target gene promoters which leads to decreased histone acetylation and reduced transactivator activity. It also regulates nuclear retention. In terms of processing, on mitogenic stimulation, phosphorylated on C-terminal serine and threonine residues by MAPK1 but also MAPK8 and/or MAPK9. Phosphorylation leads to loss of sumoylation and restores transcriptional activator activity. Phosphorylated and activated by CaMK4, MAPK11, MAPK12 and MAPK14. Upon bFGF stimulus, phosphorylated by PAK1. Phosphorylated by PRP4K at Thr-418; phosphorylation activation ELK1 transcriptional activity. Predominantly expressed in the brain, and to a lesser extent in the heart, liver and muscle.

It is found in the nucleus. Functionally, transcription factor that binds to purine-rich DNA sequences. Forms a ternary complex with SRF and the ETS and SRF motifs of the serum response element (SRE) on the promoter region of immediate early genes such as FOS and IER2. Induces target gene transcription upon JNK and MAPK-signaling pathways stimulation. The polypeptide is ETS domain-containing protein Elk-1 (Mus musculus (Mouse)).